The primary structure comprises 644 residues: Uromodulin (644 aa).

A signal peptide spans 1 to 26 (MGQLLSLTWLLLVMVVTPWFTVAGAN). The region spanning 30–66 (EARRCSECHDNATCVLDGVVTTCSCQAGFTGDGLVCE) is the EGF-like 1 domain. Disulfide bonds link Cys-34-Cys-43, Cys-37-Cys-52, Cys-54-Cys-65, Cys-71-Cys-84, Cys-79-Cys-93, Cys-95-Cys-107, Cys-113-Cys-127, Cys-121-Cys-136, Cys-138-Cys-149, Cys-151-Cys-162, Cys-156-Cys-173, Cys-177-Cys-270, Cys-198-Cys-285, Cys-220-Cys-258, Cys-226-Cys-290, Cys-251-Cys-259, Cys-300-Cys-309, Cys-303-Cys-318, Cys-320-Cys-350, Cys-338-Cys-428, and Cys-369-Cys-392. N-linked (GlcNAc...) asparagine glycosylation occurs at Asn-40. Residues 67–108 (DIDECATPWTHNCSNSICMNTLGSYECSCQDGFRLTPGLGCI) enclose the EGF-like 2; calcium-binding domain. Asn-78 is a glycosylation site (N-linked (GlcNAc...) asparagine). The region spanning 109–150 (DVNECTEQGLSNCHSLATCVNTEGSYSCVCPKGYRGDGWYCE) is the EGF-like 3; calcium-binding domain. The beta hairpin stretch occupies residues 151–174 (CSPGFCEPGLDCLPQGPSGKLVCQ). A D10C region spans residues 175-294 (DPCNVYETLT…CNLAYCTDPS (120 aa)). Asn-235 carries an N-linked (GlcNAc...) asparagine glycan. The N-linked (GlcNAc...) asparagine glycan is linked to Asn-278. Residues 295-326 (SVEGTCEECGVDEDCVSDNGRWRCQCKQDFNV) enclose the EGF-like 4 domain. The N-linked (GlcNAc...) asparagine glycan is linked to Asn-325. The ZP-N stretch occupies residues 337-432 (ECEANEIKIS…RINFECSYPL (96 aa)). The ZP domain maps to 337–592 (ECEANEIKIS…PTCSGTRYRS (256 aa)). Residues Asn-399 and Asn-450 are each glycosylated (N-linked (GlcNAc...) asparagine). Residues 433–456 (DMKVSLKTSLQPMVSALNISLGGT) are flexible ZP-N/ZP-C linker; important for secretion and polymerization into filaments. Residues 457 to 467 (GKFTVQMALFQ) form an internal hydrophobic patch (IHP) region. Positions 457–592 (GKFTVQMALF…PTCSGTRYRS (136 aa)) are ZP-C. Cystine bridges form between Cys-509/Cys-569, Cys-530/Cys-585, and Cys-574/Cys-581. The N-linked (GlcNAc...) asparagine glycan is linked to Asn-516. Residues 589–592 (RYRS) form an essential for cleavage by HPN region. Positions 601 to 609 (VLNLGPITR) are external hydrophobic patch (EHP); regulates polymerization into filaments. The GPI-anchor amidated serine moiety is linked to residue Ser-615. A propeptide spans 616 to 644 (VSKAASSNLGFLSIWLLLFLSATLTLMVH) (removed in mature form).

Homodimer that then polymerizes into long filaments. The filaments can additionally assemble laterally to form a sheet. The filaments consist of a zigzag-shaped backbone with laterally protruding arms which interact with bacterial adhesin fimH. Two fimH molecules can bind to a single UMOD monomer. Post-translationally, N-glycosylated. In terms of processing, proteolytically cleaved at a conserved C-terminal proteolytic cleavage site to generate the secreted form found in urine. This cleavage is catalyzed by HPN. As to expression, expression restricted to the thick ascending limb of the loop of Henle (TALH).

The protein localises to the apical cell membrane. It localises to the basolateral cell membrane. It is found in the cell projection. The protein resides in the cilium membrane. Its subcellular location is the secreted. Functions in biogenesis and organization of the apical membrane of epithelial cells of the thick ascending limb of Henle's loop (TALH), where it promotes formation of complex filamentous gel-like structure that may play a role in the water barrier permeability. May serve as a receptor for binding and endocytosis of cytokines (IL-1, IL-2) and TNF. Facilitates neutrophil migration across renal epithelia. In terms of biological role, in the urine, may contribute to colloid osmotic pressure, retards passage of positively charged electrolytes, and inhibits formation of liquid containing supersaturated salts and subsequent formation of salt crystals. Protects against urinary tract infections by binding to type 1 fimbriated E.coli. Binds to bacterial adhesin fimH which mediates the stable formation of bacterial aggregates, prevents the binding of E.coli to uroplakins UPK1A and UPK1B which act as urothelial receptors for type I fimbriae, and allows for pathogen clearance through micturation. Also promotes aggregation of other bacteria including K.pneumoniae, P.aeruginosa and S.mitis and so may also protect against other uropathogens. The polypeptide is Uromodulin (Umod) (Rattus norvegicus (Rat)).